The primary structure comprises 204 residues: TPR repeat-containing protein RHE_CH03534.1 (204 aa).

A signal peptide spans 1–29; it reads MSAMRLFALTSAMLPLAFILSTSPFPATA. 3 TPR repeats span residues 84–117, 118–151, and 153–185; these read INLLMQWADKAIEEKRNPAALDFLDEAIALKPDY, AESWNRRATLNFVMGNYRKSMSDIEHVLNIEPRH, and GALSGMAAILSNSGNDQLTLKAWERFLDIYPAD.

The chain is TPR repeat-containing protein RHE_CH03534.1 from Rhizobium etli (strain ATCC 51251 / DSM 11541 / JCM 21823 / NBRC 15573 / CFN 42).